The chain runs to 463 residues: Asparagine--tRNA ligase (463 aa).

Belongs to the class-II aminoacyl-tRNA synthetase family. Homodimer.

It localises to the cytoplasm. It carries out the reaction tRNA(Asn) + L-asparagine + ATP = L-asparaginyl-tRNA(Asn) + AMP + diphosphate + H(+). This chain is Asparagine--tRNA ligase, found in Alkaliphilus oremlandii (strain OhILAs) (Clostridium oremlandii (strain OhILAs)).